Here is a 446-residue protein sequence, read N- to C-terminus: Glutamyl-tRNA reductase (446 aa).

Substrate contacts are provided by residues 49–52 (TCNR), S109, 114–116 (ETQ), and Q120. The active-site Nucleophile is C50. 189–194 (GAGKMG) is a binding site for NADP(+).

Belongs to the glutamyl-tRNA reductase family. Homodimer.

It carries out the reaction (S)-4-amino-5-oxopentanoate + tRNA(Glu) + NADP(+) = L-glutamyl-tRNA(Glu) + NADPH + H(+). The protein operates within porphyrin-containing compound metabolism; protoporphyrin-IX biosynthesis; 5-aminolevulinate from L-glutamyl-tRNA(Glu): step 1/2. Catalyzes the NADPH-dependent reduction of glutamyl-tRNA(Glu) to glutamate 1-semialdehyde (GSA). In Priestia megaterium (Bacillus megaterium), this protein is Glutamyl-tRNA reductase.